Reading from the N-terminus, the 256-residue chain is Triosephosphate isomerase (256 aa).

A substrate-binding site is contributed by asparagine 9–lysine 11. Histidine 97 acts as the Electrophile in catalysis. Glutamate 169 (proton acceptor) is an active-site residue. Substrate contacts are provided by residues glycine 175, serine 214, and glycine 235 to glycine 236.

It belongs to the triosephosphate isomerase family. In terms of assembly, homodimer.

Its subcellular location is the cytoplasm. The enzyme catalyses D-glyceraldehyde 3-phosphate = dihydroxyacetone phosphate. The protein operates within carbohydrate biosynthesis; gluconeogenesis. Its pathway is carbohydrate degradation; glycolysis; D-glyceraldehyde 3-phosphate from glycerone phosphate: step 1/1. Involved in the gluconeogenesis. Catalyzes stereospecifically the conversion of dihydroxyacetone phosphate (DHAP) to D-glyceraldehyde-3-phosphate (G3P). The polypeptide is Triosephosphate isomerase (Vibrio parahaemolyticus serotype O3:K6 (strain RIMD 2210633)).